The following is a 265-amino-acid chain: Mlc titration factor A (265 aa).

Residues His-111, His-148, His-152, and Glu-211 each coordinate Zn(2+).

The protein belongs to the MtfA family. In terms of assembly, interacts with Mlc. Zn(2+) is required as a cofactor.

It is found in the cytoplasm. In terms of biological role, involved in the modulation of the activity of the glucose-phosphotransferase system (glucose-PTS). Interacts with the transcriptional repressor Mlc, preventing its interaction with DNA and leading to the modulation of expression of genes regulated by Mlc, including ptsG, which encodes the PTS system glucose-specific EIICB component. Its function is as follows. Shows zinc-dependent metallopeptidase activity. This is Mlc titration factor A from Escherichia coli (strain SMS-3-5 / SECEC).